Here is an 809-residue protein sequence, read N- to C-terminus: Trimethylamine-N-oxide reductase 2 (809 aa).

The tat-type signal signal peptide spans 1–31 (MTLTRREFIKHSGIAAGTLVVTSAAPLPAWA). Serine 176 is a binding site for Mo-bis(molybdopterin guanine dinucleotide).

This sequence belongs to the prokaryotic molybdopterin-containing oxidoreductase family. It depends on Mo-bis(molybdopterin guanine dinucleotide) as a cofactor. In terms of processing, predicted to be exported by the Tat system. The position of the signal peptide cleavage has not been experimentally proven.

The protein resides in the periplasm. It catalyses the reaction trimethylamine + 2 Fe(III)-[cytochrome c] + H2O = trimethylamine N-oxide + 2 Fe(II)-[cytochrome c] + 3 H(+). In terms of biological role, reduces trimethylamine-N-oxide (TMAO) into trimethylamine; an anaerobic reaction coupled to energy-yielding reactions. Can also reduce other N- and S-oxide compounds such as 4-methylmorpholine-N-oxide and biotin sulfoxide (BSO), but with a lower catalytic efficiency. This chain is Trimethylamine-N-oxide reductase 2 (torZ), found in Escherichia coli O6:H1 (strain CFT073 / ATCC 700928 / UPEC).